The chain runs to 304 residues: Aspartate carbamoyltransferase catalytic subunit (304 aa).

Positions 54 and 55 each coordinate carbamoyl phosphate. Position 83 (Lys-83) interacts with L-aspartate. Residues Arg-104, His-132, and Gln-135 each contribute to the carbamoyl phosphate site. Residues Arg-165 and Arg-226 each contribute to the L-aspartate site. 2 residues coordinate carbamoyl phosphate: Leu-265 and Pro-266.

It belongs to the aspartate/ornithine carbamoyltransferase superfamily. ATCase family. As to quaternary structure, heterooligomer of catalytic and regulatory chains.

The catalysed reaction is carbamoyl phosphate + L-aspartate = N-carbamoyl-L-aspartate + phosphate + H(+). The protein operates within pyrimidine metabolism; UMP biosynthesis via de novo pathway; (S)-dihydroorotate from bicarbonate: step 2/3. In terms of biological role, catalyzes the condensation of carbamoyl phosphate and aspartate to form carbamoyl aspartate and inorganic phosphate, the committed step in the de novo pyrimidine nucleotide biosynthesis pathway. The protein is Aspartate carbamoyltransferase catalytic subunit of Pyrobaculum islandicum (strain DSM 4184 / JCM 9189 / GEO3).